We begin with the raw amino-acid sequence, 502 residues long: Glutamate--tRNA ligase (502 aa).

The 'HIGH' region signature appears at 21 to 31; the sequence is PSPTGVPHVGM. Residues 265–269 carry the 'KMSKS' region motif; that stretch reads KLSKR. Lysine 268 is a binding site for ATP.

This sequence belongs to the class-I aminoacyl-tRNA synthetase family. Glutamate--tRNA ligase type 1 subfamily. In terms of assembly, monomer.

The protein resides in the cytoplasm. It catalyses the reaction tRNA(Glu) + L-glutamate + ATP = L-glutamyl-tRNA(Glu) + AMP + diphosphate. Functionally, catalyzes the attachment of glutamate to tRNA(Glu) in a two-step reaction: glutamate is first activated by ATP to form Glu-AMP and then transferred to the acceptor end of tRNA(Glu). The sequence is that of Glutamate--tRNA ligase from Mycobacterium leprae (strain TN).